Consider the following 644-residue polypeptide: Methionine--tRNA ligase (644 aa).

A 'HIGH' region motif is present at residues 14–24 (YYPSAKLHIGN). 4 residues coordinate Zn(2+): Cys129, Cys132, Cys146, and Cys149. Residues 299 to 303 (KMSKS) carry the 'KMSKS' region motif. Lys302 is a binding site for ATP. The region spanning 542-644 (DVDKLDLRVV…EDIPTGSIVR (103 aa)) is the tRNA-binding domain.

The protein belongs to the class-I aminoacyl-tRNA synthetase family. MetG type 2A subfamily. Homodimer. Zn(2+) is required as a cofactor.

It localises to the cytoplasm. The catalysed reaction is tRNA(Met) + L-methionine + ATP = L-methionyl-tRNA(Met) + AMP + diphosphate. Is required not only for elongation of protein synthesis but also for the initiation of all mRNA translation through initiator tRNA(fMet) aminoacylation. This chain is Methionine--tRNA ligase (metG), found in Clostridium acetobutylicum (strain ATCC 824 / DSM 792 / JCM 1419 / IAM 19013 / LMG 5710 / NBRC 13948 / NRRL B-527 / VKM B-1787 / 2291 / W).